Here is a 309-residue protein sequence, read N- to C-terminus: HPr kinase/phosphorylase (309 aa).

Catalysis depends on residues His-144 and Lys-165. 159 to 166 (GDSGLGKS) serves as a coordination point for ATP. Ser-166 contacts Mg(2+). Asp-183 acts as the Proton acceptor; for phosphorylation activity. Proton donor; for dephosphorylation activity in catalysis. The segment at 206-215 (IEVRGLGLID) is important for the catalytic mechanism of both phosphorylation and dephosphorylation. Glu-207 contacts Mg(2+). Arg-249 is a catalytic residue. Positions 270–275 (PIRQGR) are important for the catalytic mechanism of dephosphorylation.

Belongs to the HPrK/P family. In terms of assembly, homohexamer. Requires Mg(2+) as cofactor.

It carries out the reaction [HPr protein]-L-serine + ATP = [HPr protein]-O-phospho-L-serine + ADP + H(+). It catalyses the reaction [HPr protein]-O-phospho-L-serine + phosphate + H(+) = [HPr protein]-L-serine + diphosphate. Functionally, catalyzes the ATP- as well as the pyrophosphate-dependent phosphorylation of a specific serine residue in HPr, a phosphocarrier protein of the phosphoenolpyruvate-dependent sugar phosphotransferase system (PTS). HprK/P also catalyzes the pyrophosphate-producing, inorganic phosphate-dependent dephosphorylation (phosphorolysis) of seryl-phosphorylated HPr (P-Ser-HPr). This chain is HPr kinase/phosphorylase (hprK), found in Mycoplasmopsis pulmonis (strain UAB CTIP) (Mycoplasma pulmonis).